Here is a 414-residue protein sequence, read N- to C-terminus: Isocitrate dehydrogenase [NADP] cytoplasmic (414 aa).

S2 is modified (N-acetylserine). Y42 carries the post-translational modification Phosphotyrosine. Residue 75–77 (TIT) participates in NADP(+) binding. Residue T77 participates in substrate binding. The residue at position 81 (K81) is an N6-acetyllysine. R82 serves as a coordination point for NADP(+). Residues 94–100 (SPNGTIR) and R109 each bind substrate. An N6-succinyllysine modification is found at K126. Residues R132 and K212 each contribute to the substrate site. K224, K233, and K243 each carry N6-acetyllysine. D252 contacts Mn(2+). K260 provides a ligand contact to NADP(+). Mn(2+)-binding residues include D275 and D279. 310–315 (GTVTRH) serves as a coordination point for NADP(+). K321 carries the post-translational modification N6-acetyllysine. N328 provides a ligand contact to NADP(+). At S389 the chain carries Phosphoserine. K400 is subject to N6-succinyllysine.

The protein belongs to the isocitrate and isopropylmalate dehydrogenases family. As to quaternary structure, homodimer. The cofactor is Mg(2+). Mn(2+) serves as cofactor. In terms of processing, acetylation at Lys-374 dramatically reduces catalytic activity.

The protein resides in the cytoplasm. It localises to the cytosol. It catalyses the reaction D-threo-isocitrate + NADP(+) = 2-oxoglutarate + CO2 + NADPH. In terms of biological role, catalyzes the NADP(+)-dependent oxidative decarboxylation of isocitrate (D-threo-isocitrate) to 2-ketoglutarate (2-oxoglutarate), which is required by other enzymes such as the phytanoyl-CoA dioxygenase. Plays a critical role in the generation of NADPH, an important cofactor in many biosynthesis pathways. May act as a corneal epithelial crystallin and may be involved in maintaining corneal epithelial transparency. This chain is Isocitrate dehydrogenase [NADP] cytoplasmic (IDH1), found in Microtus mexicanus (Mexican vole).